The chain runs to 564 residues: Phosphoinositide phospholipase C 3 (564 aa).

In terms of domain architecture, EF-hand spans 19–54 (TRQPPVSIKRLFEAYSRNGKMSFDELLRFVSEVQGE). Positions 106 to 250 (HDMKAPLSHY…LKGKILISTK (145 aa)) constitute a PI-PLC X-box domain. Active-site residues include H121 and H167. Positions 296 to 412 (RDLIAIHAAN…GYVKKPRILL (117 aa)) constitute a PI-PLC Y-box domain. The C2 domain occupies 406–539 (KKPRILLDEH…KSGVRAVRLH (134 aa)). Residues D450, D456, D509, D511, and D517 each coordinate Ca(2+).

Ca(2+) is required as a cofactor. In terms of tissue distribution, expressed in leaves, roots and siliques, but not in flowers.

The protein localises to the cell membrane. It catalyses the reaction a 1,2-diacyl-sn-glycero-3-phospho-(1D-myo-inositol-4,5-bisphosphate) + H2O = 1D-myo-inositol 1,4,5-trisphosphate + a 1,2-diacyl-sn-glycerol + H(+). Functionally, the production of the second messenger molecules diacylglycerol (DAG) and inositol 1,4,5-trisphosphate (IP3) is mediated by activated phosphatidylinositol-specific phospholipase C enzymes. This chain is Phosphoinositide phospholipase C 3 (PLC3), found in Arabidopsis thaliana (Mouse-ear cress).